A 179-amino-acid chain; its full sequence is ATP synthase subunit delta (179 aa).

This sequence belongs to the ATPase delta chain family. As to quaternary structure, F-type ATPases have 2 components, F(1) - the catalytic core - and F(0) - the membrane proton channel. F(1) has five subunits: alpha(3), beta(3), gamma(1), delta(1), epsilon(1). F(0) has three main subunits: a(1), b(2) and c(10-14). The alpha and beta chains form an alternating ring which encloses part of the gamma chain. F(1) is attached to F(0) by a central stalk formed by the gamma and epsilon chains, while a peripheral stalk is formed by the delta and b chains.

Its subcellular location is the cell membrane. Its function is as follows. F(1)F(0) ATP synthase produces ATP from ADP in the presence of a proton or sodium gradient. F-type ATPases consist of two structural domains, F(1) containing the extramembraneous catalytic core and F(0) containing the membrane proton channel, linked together by a central stalk and a peripheral stalk. During catalysis, ATP synthesis in the catalytic domain of F(1) is coupled via a rotary mechanism of the central stalk subunits to proton translocation. Functionally, this protein is part of the stalk that links CF(0) to CF(1). It either transmits conformational changes from CF(0) to CF(1) or is implicated in proton conduction. This is ATP synthase subunit delta from Listeria monocytogenes serotype 4b (strain CLIP80459).